Here is a 320-residue protein sequence, read N- to C-terminus: MPMYQVKPYHGGSAPLHVELPTCMYRLPNVHSKTTSPATDAGHVQETSEPSLQALESRQDDILKRLYELKAAVDGLSKMIHTPDADLDVTNILQADEPTTLATNTLDLNSVLGKDYGALKDIVINANPASPPLSLLVLHRLLCERYRVLSTVHTHSSVKNVPENLVKCFGEQARKQSRHEYQLGFTLIWKNVPKTQMKFSVQTMCPIEGEGNIARFLFSLFGQKHNAVTLTLIDSWVDIAMFQLREGSSKEKAAVFRSMNSALGRSPWLVGNELTVADVVLWSVLQQTGGSSGAAPTNVQRWLKSCENLAPFSTALQLLK.

Serine 36 is modified (phosphoserine). The interval 82 to 162 is interaction with PRKN; it reads TPDADLDVTN…HTHSSVKNVP (81 aa). The interaction with TP53 stretch occupies residues 162–225; it reads PENLVKCFGE…FLFSLFGQKH (64 aa). The GST C-terminal domain occupies 220–317; that stretch reads LFGQKHNAVT…NLAPFSTALQ (98 aa).

As to quaternary structure, part of the multisynthetase complex (MSC), a multisubunit complex that groups tRNA ligases for Arg (RARS1), Asp (DARS1), Gln (QARS1), Ile (IARS1), Leu (LARS1), Lys (KARS1), Met (MARS1) the bifunctional ligase for Glu and Pro (EPRS1) and the auxiliary subunits AIMP1/p43, AIMP2/p38 and EEF1E1/p18. Interacts (via N-terminus) with KARS1. Interacts with EPRS1. Forms a linear complex that contains MARS1, EEF1E1, EPRS1 and AIMP2 that is at the core of the multisubunit complex. Binds FUBP1 (via C-terminus). Interacts in both its unphosphorylated and phosphorylated forms with p53/TP53 (via N-terminus) in the nucleus following UV irradiation. Interacts (via N-terminus) with PRKN/parkin (via first RING-type domain). Interacts with TARS3. Post-translationally, phosphorylated on serine residues in response to UV irradiation. In terms of processing, ubiquitinated by PRKN, leading to its degradation by the proteasome.

Its subcellular location is the cytoplasm. It is found in the cytosol. It localises to the nucleus. Required for assembly and stability of the aminoacyl-tRNA synthase complex. Mediates ubiquitination and degradation of FUBP1, a transcriptional activator of MYC, leading to MYC down-regulation which is required for aveolar type II cell differentiation. Blocks MDM2-mediated ubiquitination and degradation of p53/TP53. Functions as a proapoptotic factor. In Mus musculus (Mouse), this protein is Aminoacyl tRNA synthase complex-interacting multifunctional protein 2 (Aimp2).